The chain runs to 372 residues: Alanine dehydrogenase 1 (372 aa).

His-94 is an active-site residue. Residue 170-200 (TYVIFGGGVAATNAANVALGLNAKVIIIELN) coordinates NAD(+).

Belongs to the AlaDH/PNT family.

The catalysed reaction is L-alanine + NAD(+) + H2O = pyruvate + NH4(+) + NADH + H(+). It participates in amino-acid degradation; L-alanine degradation via dehydrogenase pathway; NH(3) and pyruvate from L-alanine: step 1/1. In terms of biological role, may play a role in cell wall synthesis as L-alanine is an important constituent of the peptidoglycan layer. The protein is Alanine dehydrogenase 1 (ald1) of Staphylococcus aureus (strain NCTC 8325 / PS 47).